Here is a 1378-residue protein sequence, read N- to C-terminus: DNA-directed RNA polymerase subunit beta (1378 aa).

Belongs to the RNA polymerase beta chain family. As to quaternary structure, the RNAP catalytic core consists of 2 alpha, 1 beta, 1 beta' and 1 omega subunit. When a sigma factor is associated with the core the holoenzyme is formed, which can initiate transcription.

The catalysed reaction is RNA(n) + a ribonucleoside 5'-triphosphate = RNA(n+1) + diphosphate. DNA-dependent RNA polymerase catalyzes the transcription of DNA into RNA using the four ribonucleoside triphosphates as substrates. This is DNA-directed RNA polymerase subunit beta from Dinoroseobacter shibae (strain DSM 16493 / NCIMB 14021 / DFL 12).